We begin with the raw amino-acid sequence, 329 residues long: NADH-quinone oxidoreductase subunit H (329 aa).

A run of 9 helical transmembrane segments spans residues 9-29 (LIKILILVAVFSALGGFATYI), 42-62 (GPCYVGPFGLLQVAADGIKLF), 75-95 (FIFTLAPIIAMVSAFVSMAPI), 117-137 (IGFLFFLAVGAAGIYAPILAG), 154-174 (IQLLSFEVVSTLTILAPLMVV), 188-208 (GGFLDWLVFKQPLAFVLFLIA), 238-258 (LKWGMFFLAEYAHLFAFSFVI), 269-291 (WGFIPGGIAILIKAGFFVFLSMW), and 309-329 (WKIMLPLALLNIVLTGIIILI).

The protein belongs to the complex I subunit 1 family. As to quaternary structure, NDH-1 is composed of 14 different subunits. Subunits NuoA, H, J, K, L, M, N constitute the membrane sector of the complex.

Its subcellular location is the cell inner membrane. It catalyses the reaction a quinone + NADH + 5 H(+)(in) = a quinol + NAD(+) + 4 H(+)(out). In terms of biological role, NDH-1 shuttles electrons from NADH, via FMN and iron-sulfur (Fe-S) centers, to quinones in the respiratory chain. The immediate electron acceptor for the enzyme in this species is believed to be ubiquinone. Couples the redox reaction to proton translocation (for every two electrons transferred, four hydrogen ions are translocated across the cytoplasmic membrane), and thus conserves the redox energy in a proton gradient. This subunit may bind ubiquinone. The protein is NADH-quinone oxidoreductase subunit H of Helicobacter pylori (strain HPAG1).